Reading from the N-terminus, the 343-residue chain is F17c-G fimbrial adhesin (343 aa).

Positions 1-22 are cleaved as a signal peptide; the sequence is MTNFYKVFLAVFILVCCNISHA. The tract at residues 23–199 is receptor-binding lectin domain; that stretch reads AVSFIGSTEN…LNPFTLNDTV (177 aa). Residues 65–66, 110–111, and 138–141 contribute to the a carbohydrate site; these read AN, DT, and STQG. Cysteine 75 and cysteine 132 are oxidised to a cystine. The interval 200 to 343 is fimbrillin-binding domain; the sequence is TSCRLLTPSA…GISTFTFSYQ (144 aa). The segment at 287-307 is disordered; that stretch reads LKFGPDSPVKGNENQWQLSTG. The span at 298-307 shows a compositional bias: polar residues; it reads NENQWQLSTG.

It belongs to the fimbrial protein family.

It is found in the fimbrium. Functionally, essential fimbrial adhesion factor that mediates binding to N-acetylglucosamine-containing receptors in the host intestinal microvilli, leading to colonization of the intestinal tissue, and diarrhea or septicemia. Also confers adhesiveness to laminin and basement membranes. In Escherichia coli, this protein is F17c-G fimbrial adhesin (f17cG).